We begin with the raw amino-acid sequence, 153 residues long: 6,7-dimethyl-8-ribityllumazine synthase (153 aa).

Residues phenylalanine 21, 55-57, and 79-81 contribute to the 5-amino-6-(D-ribitylamino)uracil site; these read AFE and TVI. Residue 84 to 85 coordinates (2S)-2-hydroxy-3-oxobutyl phosphate; sequence AT. Residue histidine 87 is the Proton donor of the active site. Phenylalanine 112 is a binding site for 5-amino-6-(D-ribitylamino)uracil. Arginine 126 provides a ligand contact to (2S)-2-hydroxy-3-oxobutyl phosphate.

It belongs to the DMRL synthase family. As to quaternary structure, forms an icosahedral capsid composed of 60 subunits, arranged as a dodecamer of pentamers.

The enzyme catalyses (2S)-2-hydroxy-3-oxobutyl phosphate + 5-amino-6-(D-ribitylamino)uracil = 6,7-dimethyl-8-(1-D-ribityl)lumazine + phosphate + 2 H2O + H(+). It functions in the pathway cofactor biosynthesis; riboflavin biosynthesis; riboflavin from 2-hydroxy-3-oxobutyl phosphate and 5-amino-6-(D-ribitylamino)uracil: step 1/2. Its function is as follows. Catalyzes the formation of 6,7-dimethyl-8-ribityllumazine by condensation of 5-amino-6-(D-ribitylamino)uracil with 3,4-dihydroxy-2-butanone 4-phosphate. This is the penultimate step in the biosynthesis of riboflavin. The protein is 6,7-dimethyl-8-ribityllumazine synthase of Bacillus cereus (strain 03BB102).